Reading from the N-terminus, the 853-residue chain is Rod cGMP-specific 3',5'-cyclic phosphodiesterase subunit beta (853 aa).

S2 is subject to N-acetylserine. 2 GAF domains span residues 71–220 and 252–429; these read NMER…TLNL and DIER…GWSV. The 334-residue stretch at 481-814 folds into the PDEase domain; that stretch reads EEDELGKILK…KEWKALADEY (334 aa). H557 serves as the catalytic Proton donor. H561, H597, D598, and D718 together coordinate a divalent metal cation. Position 850 is a cysteine methyl ester (C850). C850 carries S-geranylgeranyl cysteine lipidation. The propeptide at 851–853 is removed in mature form; it reads RIL.

It belongs to the cyclic nucleotide phosphodiesterase family. Oligomer composed of two catalytic chains (alpha and beta), an inhibitory chain (gamma) and the delta chain. The cofactor is a divalent metal cation.

Its subcellular location is the membrane. The protein localises to the cell projection. The protein resides in the cilium. It is found in the photoreceptor outer segment. The enzyme catalyses 3',5'-cyclic GMP + H2O = GMP + H(+). Necessary for the formation of a functional phosphodiesterase holoenzyme. Involved in retinal circadian rhythm photoentrainment via modulation of UVA and orange light-induced phase-shift of the retina clock. May participate in processes of transmission and amplification of the visual signal. Its function is as follows. Rod-specific cGMP phosphodiesterase that catalyzes the hydrolysis of 3',5'-cyclic GMP. Necessary for the formation of a functional phosphodiesterase holoenzyme. Involved in retinal circadian rhythm photoentrainment via modulation of UVA and orange light-induced phase-shift of the retina clock. May participate in processes of transmission and amplification of the visual signal. The sequence is that of Rod cGMP-specific 3',5'-cyclic phosphodiesterase subunit beta (PDE6B) from Bos taurus (Bovine).